The sequence spans 446 residues: 23S rRNA (uracil(1939)-C(5))-methyltransferase RlmD (446 aa).

The TRAM domain maps to 6 to 64 (KKLPQESITCEIESLSHEGRGVSHKDGKTLFVEGALPGETVTARYVNSRRSYDELAVEE). Cys-77, Cys-83, Cys-86, and Cys-165 together coordinate [4Fe-4S] cluster. S-adenosyl-L-methionine contacts are provided by Gln-275, Phe-304, Asn-309, Glu-325, Asp-352, and Asp-377. Cys-403 (nucleophile) is an active-site residue.

The protein belongs to the class I-like SAM-binding methyltransferase superfamily. RNA M5U methyltransferase family. RlmD subfamily.

The catalysed reaction is uridine(1939) in 23S rRNA + S-adenosyl-L-methionine = 5-methyluridine(1939) in 23S rRNA + S-adenosyl-L-homocysteine + H(+). Its function is as follows. Catalyzes the formation of 5-methyl-uridine at position 1939 (m5U1939) in 23S rRNA. This Hahella chejuensis (strain KCTC 2396) protein is 23S rRNA (uracil(1939)-C(5))-methyltransferase RlmD.